The following is a 366-amino-acid chain: Arfaptin-1 (366 aa).

A disordered region spans residues 1–78; that stretch reads MAEESPKNSA…SSAPPLPCVL (78 aa). Ala2 bears the N-acetylalanine mark. Position 5 is a phosphoserine (Ser5). A compositionally biased stretch (basic and acidic residues) spans 22-35; it reads GDAHEHGYNRDLKH. Phosphoserine is present on residues Ser36 and Ser39. Residues 44 to 53 show a composition bias toward polar residues; the sequence is SETQITSHGF. 3 positions are modified to phosphoserine: Ser69, Ser79, and Ser125. Residues 146–346 enclose the AH domain; sequence TVDLELEAQI…NQKQLEQTLK (201 aa). Thr354 is subject to Phosphothreonine.

In terms of assembly, forms homodimers or heterodimers with ARFIP2. Interacts with non-myristoylated GTP-bound ARF3, but not to GDP-bound ARF3. Interacts with ARF1. Binds with lower affinity to ARF5 and with very little affinity to ARF6. Interacts with ARL1. Interacts with ATG9A.

It localises to the golgi apparatus. The protein resides in the trans-Golgi network membrane. Its function is as follows. Plays a role in controlling biogenesis of secretory granules at the trans-Golgi network. Mechanistically, binds ARF-GTP at the neck of a growing secretory granule precursor and forms a protective scaffold. Once the granule precursor has been completely loaded, active PRKD1 phosphorylates ARFIP1 and releases it from ARFs. In turn, ARFs induce fission. Through this mechanism, ensures proper secretory granule formation at the Golgi of pancreatic beta cells. In Rattus norvegicus (Rat), this protein is Arfaptin-1.